We begin with the raw amino-acid sequence, 343 residues long: Small ribosomal subunit biogenesis GTPase RsgA (343 aa).

Residues 116–275 (RGQLKPVAAN…LIDSPGIREF (160 aa)) form the CP-type G domain. Residues 163-166 (NKAD) and 217-225 (GQSGVGKSS) contribute to the GTP site. Zn(2+)-binding residues include Cys299, Cys304, His306, and Cys312.

This sequence belongs to the TRAFAC class YlqF/YawG GTPase family. RsgA subfamily. As to quaternary structure, monomer. Associates with 30S ribosomal subunit, binds 16S rRNA. Requires Zn(2+) as cofactor.

It is found in the cytoplasm. One of several proteins that assist in the late maturation steps of the functional core of the 30S ribosomal subunit. Helps release RbfA from mature subunits. May play a role in the assembly of ribosomal proteins into the subunit. Circularly permuted GTPase that catalyzes slow GTP hydrolysis, GTPase activity is stimulated by the 30S ribosomal subunit. This chain is Small ribosomal subunit biogenesis GTPase RsgA, found in Pseudomonas syringae pv. tomato (strain ATCC BAA-871 / DC3000).